Reading from the N-terminus, the 209-residue chain is Small ribosomal subunit protein uS4 (209 aa).

The segment at 23-46 (SRNPLLKKPHPPGQHGMQRKKKSD) is disordered. The 64-residue stretch at 93–156 (CRLDNMVYRM…RKLQSVQESL (64 aa)) folds into the S4 RNA-binding domain.

The protein belongs to the universal ribosomal protein uS4 family. As to quaternary structure, part of the 30S ribosomal subunit. Contacts protein S5. The interaction surface between S4 and S5 is involved in control of translational fidelity.

Its function is as follows. One of the primary rRNA binding proteins, it binds directly to 16S rRNA where it nucleates assembly of the body of the 30S subunit. In terms of biological role, with S5 and S12 plays an important role in translational accuracy. The protein is Small ribosomal subunit protein uS4 of Chlamydia caviae (strain ATCC VR-813 / DSM 19441 / 03DC25 / GPIC) (Chlamydophila caviae).